The sequence spans 794 residues: DNA ligase (794 aa).

Residues 35 to 39, 84 to 85, and glutamate 126 contribute to the NAD(+) site; these read DAEYD and SL. Lysine 128 functions as the N6-AMP-lysine intermediate in the catalytic mechanism. NAD(+) contacts are provided by arginine 149, glutamate 186, lysine 302, and lysine 326. Positions 420, 423, 450, and 456 each coordinate Zn(2+). The BRCT domain occupies 711-794; sequence VEGLPLAGQT…KLFDEHGVAR (84 aa).

The protein belongs to the NAD-dependent DNA ligase family. LigA subfamily. Mg(2+) serves as cofactor. It depends on Mn(2+) as a cofactor.

It catalyses the reaction NAD(+) + (deoxyribonucleotide)n-3'-hydroxyl + 5'-phospho-(deoxyribonucleotide)m = (deoxyribonucleotide)n+m + AMP + beta-nicotinamide D-nucleotide.. DNA ligase that catalyzes the formation of phosphodiester linkages between 5'-phosphoryl and 3'-hydroxyl groups in double-stranded DNA using NAD as a coenzyme and as the energy source for the reaction. It is essential for DNA replication and repair of damaged DNA. This is DNA ligase from Pseudomonas aeruginosa (strain UCBPP-PA14).